An 811-amino-acid chain; its full sequence is Vacuolar protein sorting-associated protein 70 (811 aa).

The segment covering 1–21 has biased composition (basic and acidic residues); the sequence is MRMIQRERKREKEEGQLKERT. Positions 1 to 63 are disordered; the sequence is MRMIQRERKR…MNDSFTLTSR (63 aa). A glycan (N-linked (GlcNAc...) asparagine) is linked at Asn55. Residues 90-110 traverse the membrane as a helical segment; the sequence is FMYLILASLLLYMGFVAAFAP. Residue Asn237 is glycosylated (N-linked (GlcNAc...) asparagine). The tract at residues 334 to 367 is disordered; the sequence is FSDTPGDPTTPGYPSKDSDTEHMSPVGRVPRIPS. Residues 336–345 show a composition bias toward low complexity; that stretch reads DTPGDPTTPG. Residues His445, Asp456, and Asp522 each coordinate Zn(2+). 2 N-linked (GlcNAc...) asparagine glycosylation sites follow: Asn568 and Asn599. Position 607 (His607) interacts with Zn(2+). A glycan (N-linked (GlcNAc...) asparagine) is linked at Asn670.

It belongs to the peptidase M28 family. M28B subfamily. Zn(2+) serves as cofactor.

It is found in the membrane. Involved in vacuolar protein sorting. This is Vacuolar protein sorting-associated protein 70 (VPS70) from Saccharomyces cerevisiae (strain ATCC 204508 / S288c) (Baker's yeast).